The chain runs to 455 residues: Bifunctional protein GlmU (455 aa).

Residues 1–227 (MGLSVIILAA…CEEVQGVNDR (227 aa)) form a pyrophosphorylase region. UDP-N-acetyl-alpha-D-glucosamine contacts are provided by residues 8 to 11 (LAAG), lysine 22, glutamine 73, 78 to 79 (GT), 100 to 102 (YGD), glycine 137, glutamate 152, asparagine 167, and asparagine 225. Aspartate 102 contributes to the Mg(2+) binding site. Asparagine 225 contacts Mg(2+). The interval 228–248 (WELTKLERYYQRLMAKKLSLA) is linker. The segment at 249 to 455 (GVTIIDPERF…KGWHRPTKKE (207 aa)) is N-acetyltransferase. Residues arginine 332 and lysine 350 each coordinate UDP-N-acetyl-alpha-D-glucosamine. Histidine 362 acts as the Proton acceptor in catalysis. Tyrosine 365 and asparagine 376 together coordinate UDP-N-acetyl-alpha-D-glucosamine. Residues alanine 379, 385–386 (NY), serine 404, alanine 422, and arginine 439 contribute to the acetyl-CoA site.

The protein in the N-terminal section; belongs to the N-acetylglucosamine-1-phosphate uridyltransferase family. This sequence in the C-terminal section; belongs to the transferase hexapeptide repeat family. In terms of assembly, homotrimer. Mg(2+) is required as a cofactor.

It is found in the cytoplasm. It carries out the reaction alpha-D-glucosamine 1-phosphate + acetyl-CoA = N-acetyl-alpha-D-glucosamine 1-phosphate + CoA + H(+). The enzyme catalyses N-acetyl-alpha-D-glucosamine 1-phosphate + UTP + H(+) = UDP-N-acetyl-alpha-D-glucosamine + diphosphate. The protein operates within nucleotide-sugar biosynthesis; UDP-N-acetyl-alpha-D-glucosamine biosynthesis; N-acetyl-alpha-D-glucosamine 1-phosphate from alpha-D-glucosamine 6-phosphate (route II): step 2/2. It functions in the pathway nucleotide-sugar biosynthesis; UDP-N-acetyl-alpha-D-glucosamine biosynthesis; UDP-N-acetyl-alpha-D-glucosamine from N-acetyl-alpha-D-glucosamine 1-phosphate: step 1/1. It participates in bacterial outer membrane biogenesis; LPS lipid A biosynthesis. Catalyzes the last two sequential reactions in the de novo biosynthetic pathway for UDP-N-acetylglucosamine (UDP-GlcNAc). The C-terminal domain catalyzes the transfer of acetyl group from acetyl coenzyme A to glucosamine-1-phosphate (GlcN-1-P) to produce N-acetylglucosamine-1-phosphate (GlcNAc-1-P), which is converted into UDP-GlcNAc by the transfer of uridine 5-monophosphate (from uridine 5-triphosphate), a reaction catalyzed by the N-terminal domain. The sequence is that of Bifunctional protein GlmU from Coxiella burnetii (strain CbuK_Q154) (Coxiella burnetii (strain Q154)).